The chain runs to 539 residues: Phosphoenolpyruvate carboxykinase (ATP) (539 aa).

Residues Arg64, Tyr206, and Lys212 each contribute to the substrate site. ATP contacts are provided by residues Lys212, His231, and 247 to 255 (GLSGTGKTT). Mn(2+)-binding residues include Lys212 and His231. Asp268 lines the Mn(2+) pocket. Residues Glu296, Arg332, 448-449 (RI), and Thr454 each bind ATP. Residue Arg332 coordinates substrate.

It belongs to the phosphoenolpyruvate carboxykinase (ATP) family. Monomer. Mn(2+) is required as a cofactor.

It localises to the cytoplasm. The catalysed reaction is oxaloacetate + ATP = phosphoenolpyruvate + ADP + CO2. It participates in carbohydrate biosynthesis; gluconeogenesis. In terms of biological role, involved in the gluconeogenesis. Catalyzes the conversion of oxaloacetate (OAA) to phosphoenolpyruvate (PEP) through direct phosphoryl transfer between the nucleoside triphosphate and OAA. This Yersinia pseudotuberculosis serotype O:1b (strain IP 31758) protein is Phosphoenolpyruvate carboxykinase (ATP).